The following is a 213-amino-acid chain: MGRNKKKKRDGDDRRPRLVLSFDEEKRREYLTGFHKRKVERKKAAIEEIKQRLKEEQRKLREERHQEYLKMLAEREEALEEADELDRLVTAKTESVQYDHPNHTVTVTTISDLDLSGARLLGLTPPEGGAGDRSEEEASSTEKPTKALPRKSRDPLLSQRISSLTASLHAHSRKKVKRKHPRRAQDSKKPPRAPRTSKAQRRRLTGKARHSGE.

Residues 33–96 (GFHKRKVERK…RLVTAKTESV (64 aa)) are a coiled coil. The disordered stretch occupies residues 118–213 (ARLLGLTPPE…LTGKARHSGE (96 aa)). 2 stretches are compositionally biased toward basic residues: residues 170-182 (AHSR…KHPR) and 198-213 (KAQR…HSGE).

It belongs to the RRP17 family. Interacts with KIAA1191.

The protein resides in the nucleus. Its subcellular location is the nucleolus. It localises to the cytoplasm. In terms of biological role, multifunctional RNA binding protein that plays a role in RNA metabolism and DNA maintenance. Participates in the resolution of DNA stress and the maintenance of genome integrity by localizing to sites of DNA insults. Also plays a role in proper nucleolar organization by limiting nucleolar size and regulating nucleolar number. Mechanistically, regulates the nucleolar levels of fibrillarin and nucleolin, two key players in pre-rRNA processing and ribosome assembly. This chain is Nucleolar protein 12 (NOL12), found in Homo sapiens (Human).